Reading from the N-terminus, the 225-residue chain is Platelet-activating factor acetylhydrolase IB subunit beta homolog (225 aa).

The protein belongs to the 'GDSL' lipolytic enzyme family. Platelet-activating factor acetylhydrolase IB beta/gamma subunits subfamily. In terms of assembly, does not interact with Lis-1.

The polypeptide is Platelet-activating factor acetylhydrolase IB subunit beta homolog (Paf-AHalpha) (Drosophila melanogaster (Fruit fly)).